The sequence spans 155 residues: MRKNRAPKRTVLPDPVFNNTLVTRIINVIMEDGKKGLAQRILYGAFDLIEQRTKEKPLTVFERAVGNVMPRLELRVRRIAGSNYQVPTEVPQDRKIALALRWIAMFARKRHEKTMLEKIANEIIDASNNTGAAIKKKDDTHKMAEANKAFAHMRW.

This sequence belongs to the universal ribosomal protein uS7 family. As to quaternary structure, part of the 30S ribosomal subunit. Contacts proteins S9 and S11.

In terms of biological role, one of the primary rRNA binding proteins, it binds directly to 16S rRNA where it nucleates assembly of the head domain of the 30S subunit. Is located at the subunit interface close to the decoding center, probably blocks exit of the E-site tRNA. This is Small ribosomal subunit protein uS7 from Mycoplasma pneumoniae (strain ATCC 29342 / M129 / Subtype 1) (Mycoplasmoides pneumoniae).